The sequence spans 130 residues: Small ribosomal subunit protein uS17m (130 aa).

It belongs to the universal ribosomal protein uS17 family. As to quaternary structure, component of the mitochondrial ribosome small subunit (28S) which comprises a 12S rRNA and about 30 distinct proteins.

The protein resides in the mitochondrion. The sequence is that of Small ribosomal subunit protein uS17m (MRPS17) from Bos taurus (Bovine).